The sequence spans 149 residues: Ribonuclease H (149 aa).

The RNase H type-1 domain occupies 4–145 (QRGVVEAFTD…ADALANQGID (142 aa)). Residues Asp13, Glu51, Asp73, and Asp137 each coordinate Mg(2+).

Belongs to the RNase H family. In terms of assembly, monomer. It depends on Mg(2+) as a cofactor.

The protein localises to the cytoplasm. The catalysed reaction is Endonucleolytic cleavage to 5'-phosphomonoester.. Its function is as follows. Endonuclease that specifically degrades the RNA of RNA-DNA hybrids. This chain is Ribonuclease H, found in Halorhodospira halophila (strain DSM 244 / SL1) (Ectothiorhodospira halophila (strain DSM 244 / SL1)).